A 115-amino-acid polypeptide reads, in one-letter code: U3-lycotoxin-Ls1a (115 aa).

An N-terminal signal peptide occupies residues 1–20 (MKFVLLFGVLLLTLFSYSSA). The propeptide occupies 21-44 (EMLDDFDQADEDELLSLIEKEEAR). 4 disulfide bridges follow: Cys48-Cys63, Cys55-Cys72, Cys62-Cys87, and Cys74-Cys85.

Belongs to the neurotoxin 19 (CSTX) family. 01 subfamily. Expressed by the venom gland.

It is found in the secreted. The polypeptide is U3-lycotoxin-Ls1a (Lycosa singoriensis (Wolf spider)).